The primary structure comprises 318 residues: Mechanosensory protein 3 (318 aa).

LIM zinc-binding domains follow at residues 27-86 and 87-152; these read NKCY…DYSA and HRCA…PMDD. The segment at residues 214-273 is a DNA-binding region (homeobox); it reads RRGPRTTIRQNQLDVLNEMFSNTPKPSKHARAKLALETGLSMRVIQVWFQNRRSKERRLK.

It is found in the nucleus. Specifies differentiation of the set of six touch receptor neurons. Binds cooperatively as a heterodimer with unc-86 to sites in the mec-3 gene promoter. The protein is Mechanosensory protein 3 (mec-3) of Caenorhabditis briggsae.